Consider the following 228-residue polypeptide: uncharacterized protein (228 aa).

A run of 5 helical transmembrane segments spans residues 14-34, 42-62, 130-150, 156-176, and 192-212; these read HTIS…MLLV, VALF…AITL, FIFS…LVGS, FSFD…VLFM, and IVIA…LIAL.

The protein belongs to the AzlC family.

It is found in the cell membrane. This is an uncharacterized protein from Helicobacter pylori (strain ATCC 700392 / 26695) (Campylobacter pylori).